The primary structure comprises 68 residues: Small ribosomal subunit protein eS17 (68 aa).

This sequence belongs to the eukaryotic ribosomal protein eS17 family.

In Staphylothermus marinus (strain ATCC 43588 / DSM 3639 / JCM 9404 / F1), this protein is Small ribosomal subunit protein eS17.